Reading from the N-terminus, the 148-residue chain is Lysozyme C (148 aa).

The N-terminal stretch at M1–G18 is a signal peptide. The C-type lysozyme domain occupies K19 to V148. 4 cysteine pairs are disulfide-bonded: C24/C146, C48/C134, C83/C99, and C95/C113. Catalysis depends on residues E53 and D71.

The protein belongs to the glycosyl hydrolase 22 family. In terms of assembly, monomer.

Its subcellular location is the secreted. It catalyses the reaction Hydrolysis of (1-&gt;4)-beta-linkages between N-acetylmuramic acid and N-acetyl-D-glucosamine residues in a peptidoglycan and between N-acetyl-D-glucosamine residues in chitodextrins.. Its function is as follows. Lysozymes have primarily a bacteriolytic function; those in tissues and body fluids are associated with the monocyte-macrophage system and enhance the activity of immunoagents. The protein is Lysozyme C (LYZ) of Miopithecus talapoin (Angolan talapoin).